The sequence spans 173 residues: 3-hydroxydecanoyl-[acyl-carrier-protein] dehydratase (173 aa).

Histidine 71 is a catalytic residue.

It belongs to the thioester dehydratase family. FabA subfamily. As to quaternary structure, homodimer.

Its subcellular location is the cytoplasm. The catalysed reaction is a (3R)-hydroxyacyl-[ACP] = a (2E)-enoyl-[ACP] + H2O. It catalyses the reaction (3R)-hydroxydecanoyl-[ACP] = (2E)-decenoyl-[ACP] + H2O. It carries out the reaction (2E)-decenoyl-[ACP] = (3Z)-decenoyl-[ACP]. Its pathway is lipid metabolism; fatty acid biosynthesis. Functionally, necessary for the introduction of cis unsaturation into fatty acids. Catalyzes the dehydration of (3R)-3-hydroxydecanoyl-ACP to E-(2)-decenoyl-ACP and then its isomerization to Z-(3)-decenoyl-ACP. Can catalyze the dehydratase reaction for beta-hydroxyacyl-ACPs with saturated chain lengths up to 16:0, being most active on intermediate chain length. This chain is 3-hydroxydecanoyl-[acyl-carrier-protein] dehydratase, found in Bradyrhizobium diazoefficiens (strain JCM 10833 / BCRC 13528 / IAM 13628 / NBRC 14792 / USDA 110).